The chain runs to 283 residues: Lectin-like protein At1g53080 (283 aa).

Residues 1–23 (MQIHKLCIFVLFISLLSSKTISA) form the signal peptide. Residues 24–277 (VKFNFNRFDG…RHDIWSWSFE (254 aa)) form a legume-lectin like region. Residues asparagine 84 and asparagine 138 are each glycosylated (N-linked (GlcNAc...) asparagine). At serine 247 the chain carries Phosphoserine.

Belongs to the leguminous lectin family.

Its subcellular location is the secreted. It is found in the extracellular space. The protein resides in the apoplast. This chain is Lectin-like protein At1g53080, found in Arabidopsis thaliana (Mouse-ear cress).